The chain runs to 774 residues: E3 ubiquitin-protein ligase UHRF1 (774 aa).

Residues 1-78 enclose the Ubiquitin-like domain; it reads MWIQVRTMDG…IQLLVRQSLA (78 aa). Phosphoserine occurs at positions 76, 91, 93, 95, and 161. A disordered region spans residues 83 to 120; it reads TKERDSELSDSDSGYGVGHSESDKSSTHGEGTADGDDK. Tudor-like stretches follow at residues 129–205 and 212–280; these read GLYK…ARAR and DLEV…IELP. A Glycyl lysine isopeptide (Lys-Gly) (interchain with G-Cter in SUMO2) cross-link involves residue Lys276. At Ser284 the chain carries Phosphoserine. Residues 293 to 298 are linker; that stretch reads RKSGPS. The residue at position 295 (Ser295) is a Phosphoserine; by PKA. The segment at 296 to 363 adopts a PHD-type zinc-finger fold; the sequence is GPSCQYCKDD…EWYCPSCRTD (68 aa). Histone H3R2me0 binding regions lie at residues 330–334 and 350–352; these read CDECD and PPE. Ser365 is subject to Phosphoserine. Residue Lys382 forms a Glycyl lysine isopeptide (Lys-Gly) (interchain with G-Cter in SUMO2) linkage. The segment at 382–605 is methyl-CpG binding and interaction with HDAC1; the sequence is KMASATSSSR…QLGLTMQYPE (224 aa). Lys396 bears the N6-acetyllysine mark. The region spanning 416 to 578 is the YDG domain; sequence GPIPGVPVGT…FIVWRYLLRR (163 aa). The interval 442–443 is required to promote base flipping; sequence HV. Residues 460 to 461 and Asp466 contribute to the DNA site; that span reads AG. 2 required for formation of a 5-methylcytosine-binding pocket regions span residues 463-466 and 475-478; these read YEDD and YTGS. Ser511 is subject to Phosphoserine. Lys542 is subject to N6-acetyllysine; alternate. Lys542 participates in a covalent cross-link: Glycyl lysine isopeptide (Lys-Gly) (interchain with G-Cter in SUMO2); alternate. The disordered stretch occupies residues 616–657; that stretch reads KNRKRPAKALEQGPSSSKIGKSKRKSTGPATTSPRVSKKSKL. Ser631 bears the Phosphoserine; by CDK1 mark. A phosphoserine mark is found at Ser641 and Ser648. Lys656 is covalently cross-linked (Glycyl lysine isopeptide (Lys-Gly) (interchain with G-Cter in SUMO2)). An RING-type zinc finger spans residues 705-744; sequence CICCQELVFRPVTTVCQHNVCKDCLDRSFRAQVFSCPACR. A Phosphoserine modification is found at Ser751.

As to quaternary structure, interacts with DNMT3A and DNMT3B. Interacts with DNMT1; the interaction is direct. Interacts with USP7; leading to its deubiquitination. Interacts with histone H3. Interacts with HDAC1, but not with HDAC2. Interacts with BLTP3A. Interacts with PML. Interacts with EHMT2. Binds methylated CpG containing oligonucleotides. Interacts with ZNF263; recruited to the SIX3 promoter along with other proteins involved in chromatin modification and transcriptional corepression where it contributes to transcriptional repression. Interacts with UHRF2. Interacts with FANCD2. Interacts with TET1 isoform 2; this interaction induces the recruitment of TET1 isoform 2 to replicating heterochromatin. Post-translationally, phosphorylation at Ser-295 of the linker region decreases the binding to H3K9me3. Phosphorylation at Ser-631 by CDK1 during M phase impairs interaction with USP7, preventing deubiquitination and leading to degradation by the proteasome. In terms of processing, ubiquitinated; which leads to proteasomal degradation. Autoubiquitinated; interaction with USP7 leads to deubiquitination and prevents degradation. Ubiquitination and degradation takes place during M phase, when phosphorylation at Ser-631 prevents interaction with USP7 and subsequent deubiquitination. Polyubiquitination may be stimulated by DNA damage.

It localises to the nucleus. It carries out the reaction S-ubiquitinyl-[E2 ubiquitin-conjugating enzyme]-L-cysteine + [acceptor protein]-L-lysine = [E2 ubiquitin-conjugating enzyme]-L-cysteine + N(6)-ubiquitinyl-[acceptor protein]-L-lysine.. It participates in protein modification; protein ubiquitination. Multidomain protein that acts as a key epigenetic regulator by bridging DNA methylation and chromatin modification. Specifically recognizes and binds hemimethylated DNA at replication forks via its YDG domain and recruits DNMT1 methyltransferase to ensure faithful propagation of the DNA methylation patterns through DNA replication. In addition to its role in maintenance of DNA methylation, also plays a key role in chromatin modification: through its tudor-like regions and PHD-type zinc fingers, specifically recognizes and binds histone H3 trimethylated at 'Lys-9' (H3K9me3) and unmethylated at 'Arg-2' (H3R2me0), respectively, and recruits chromatin proteins. Enriched in pericentric heterochromatin where it recruits different chromatin modifiers required for this chromatin replication. Also localizes to euchromatic regions where it negatively regulates transcription possibly by impacting DNA methylation and histone modifications. Has E3 ubiquitin-protein ligase activity by mediating the ubiquitination of target proteins such as histone H3 and PML. It is still unclear how E3 ubiquitin-protein ligase activity is related to its role in chromatin in vivo. Plays a role in DNA repair by cooperating with UHRF2 to ensure recruitment of FANCD2 to interstrand cross-links (ICLs) leading to FANCD2 activation. Plays a pivotal role in the establishment of correct spindle architecture by catalyzing the 'Lys-63'-linked ubiquitination of KIF11, thereby controlling KIF11 localization on the spindle. The chain is E3 ubiquitin-protein ligase UHRF1 (Uhrf1) from Rattus norvegicus (Rat).